The following is a 527-amino-acid chain: MADSRDPASDQMKQWKEQRAPQKPDVLTTGGGNPIGDKLNIMTAGPRGPLLVQDVVFTDEMAHFDRERIPERVVHAKGAGAFGYFEVTHDITRYSKAKVFEHIGKRTPIAVRFSTVAGESGSADTVRDPRGFAVKFYTEDGNWDLVGNNTPIFFIRDAMLFPSFIHSQKRNPQTHLKDPDMVWDFWSLCPESLHQVTFLFSDRGIPDGHRHMNGYGSHTFKLVNANGEAVYCKFHYKTDQGIKNLPVEEAGRLAQEDPDYGLRDLFNAIASGNYPSWTFYIQVMTFKEAETFPFNPFDLTKVWPHKDYPLIPVGKLVLNRNPANYFAEVEQMAFDPSNMPPGIEPSPDKMLQGRLFAYPDTHRHRLGPNYLQIPVNCPYRARVANYQRDGPMCMHDNQGGAPNYYPNSFSAPEQQGSALEHHSQCSADVKRFNSANEDNVTQVRTFYTKVLNEEERKRLCENIANHLKDAQLFIQRKAVKNFTDVHPDYGARVQALLDQYNSQKPKNAIHTYVQAGSHIAAKGKANL.

A compositionally biased stretch (basic and acidic residues) spans 1–22 (MADSRDPASDQMKQWKEQRAPQ). The tract at residues 1-34 (MADSRDPASDQMKQWKEQRAPQKPDVLTTGGGNP) is disordered. Ala-2 carries the N-acetylalanine modification. Ser-9 bears the Phosphoserine mark. N6-succinyllysine is present on Lys-13. Active-site residues include His-75 and Asn-148. NADP(+)-binding residues include His-194, Ser-201, Arg-203, and Asn-213. Position 221 is an N6-succinyllysine (Lys-221). Lys-233 is subject to N6-acetyllysine. 4 residues coordinate NADP(+): Lys-237, Trp-303, His-305, and Lys-306. Lys-306 is subject to N6-acetyllysine; alternate. Lys-306 is modified (N6-succinyllysine; alternate). Tyr-358 contributes to the heme binding site. Phosphoserine occurs at positions 417 and 434. An N6-acetyllysine; alternate mark is found at Lys-449 and Lys-480. N6-succinyllysine; alternate is present on residues Lys-449 and Lys-480. A Phosphothreonine modification is found at Thr-511. Ser-517 carries the phosphoserine modification. Lys-522 bears the N6-succinyllysine mark. Residues 524–527 (KANL) carry the Microbody targeting signal; atypical motif.

The protein belongs to the catalase family. In terms of assembly, homotetramer. Interacts (via microbody targeting signal) with PEX5, monomeric form interacts with PEX5, leading to its translocation into peroxisomes. Requires heme as cofactor. NADP(+) is required as a cofactor. In terms of tissue distribution, expressed in renal proximal tubules (at protein level).

The protein resides in the peroxisome matrix. The catalysed reaction is 2 H2O2 = O2 + 2 H2O. Functionally, catalyzes the degradation of hydrogen peroxide (H(2)O(2)) generated by peroxisomal oxidases to water and oxygen, thereby protecting cells from the toxic effects of hydrogen peroxide. Promotes growth of cells including T-cells, B-cells, myeloid leukemia cells, melanoma cells, mastocytoma cells and normal and transformed fibroblast cells. The protein is Catalase (Cat) of Rattus norvegicus (Rat).